A 304-amino-acid chain; its full sequence is Putative ankyrin repeat protein R598 (304 aa).

ANK repeat units lie at residues 7–36, 77–107, 122–151, 152–181, 183–209, 210–239, and 265–293; these read NIVTDIKNAICKDDLDSFIILMENNPSINL, YISTVLREEVIKNCSVKILKYLFDMGLPVDF, GSNHYIKENPGQDTLSLLRLLIEYGVDVNA, HNYLPLYSAVSSKNFDKVKLLVENGANVLR, ANGNENSFYFKIDSIKYLLDNGVEIDM, NLSRALFLSIKDNSIECIQFYLELGADINK, and FDFTSLNKLAGNNNERIIDVLINEANVDI.

The sequence is that of Putative ankyrin repeat protein R598 from Acanthamoeba polyphaga (Amoeba).